The chain runs to 292 residues: Probable 2-(5''-triphosphoribosyl)-3'-dephosphocoenzyme-A synthase (292 aa).

This sequence belongs to the CitG/MdcB family.

The enzyme catalyses 3'-dephospho-CoA + ATP = 2'-(5''-triphospho-alpha-D-ribosyl)-3'-dephospho-CoA + adenine. This Shigella sonnei (strain Ss046) protein is Probable 2-(5''-triphosphoribosyl)-3'-dephosphocoenzyme-A synthase.